The chain runs to 343 residues: Aspartate beta-hydroxylase domain-containing protein 2 (343 aa).

Residues 1–31 are Cytoplasmic-facing; sequence MWLEWLVAWSWSLDGLRDCIATGIQSVRDCD. Residues 32–52 traverse the membrane as a helical segment; the sequence is GTAVITVACLLILFVWYCYHV. Topologically, residues 53–343 are lumenal; that stretch reads GREQPRPHVS…ALDFIFAPGR (291 aa). N-linked (GlcNAc...) asparagine glycosylation is found at asparagine 77 and asparagine 185. The 2-oxoglutarate site is built by tryptophan 202 and serine 246. Fe cation is bound at residue histidine 257. Residue 266-268 participates in 2-oxoglutarate binding; sequence RCH. Position 302 (histidine 302) interacts with Fe cation. Arginine 315 lines the 2-oxoglutarate pocket.

Belongs to the aspartyl/asparaginyl beta-hydroxylase family. Fe cation is required as a cofactor.

It is found in the membrane. Functionally, may function as 2-oxoglutarate-dependent dioxygenase. The polypeptide is Aspartate beta-hydroxylase domain-containing protein 2 (Asphd2) (Mus musculus (Mouse)).